The following is a 166-amino-acid chain: Endoribonuclease YbeY (166 aa).

His131, His135, and His141 together coordinate Zn(2+).

The protein belongs to the endoribonuclease YbeY family. Zn(2+) is required as a cofactor.

The protein localises to the cytoplasm. Its function is as follows. Single strand-specific metallo-endoribonuclease involved in late-stage 70S ribosome quality control and in maturation of the 3' terminus of the 16S rRNA. The sequence is that of Endoribonuclease YbeY from Dehalococcoides mccartyi (strain CBDB1).